A 596-amino-acid chain; its full sequence is Aspartate--tRNA(Asp/Asn) ligase (596 aa).

Residue Glu172 participates in L-aspartate binding. Residues 196–199 (QLFK) form an aspartate region. Residue Arg218 coordinates L-aspartate. Residues 218 to 220 (RDE) and Gln227 contribute to the ATP site. His455 lines the L-aspartate pocket. Residue Glu489 participates in ATP binding. Arg496 serves as a coordination point for L-aspartate. Residue 541 to 544 (GLDR) coordinates ATP.

This sequence belongs to the class-II aminoacyl-tRNA synthetase family. Type 1 subfamily. As to quaternary structure, homodimer.

The protein resides in the cytoplasm. The catalysed reaction is tRNA(Asx) + L-aspartate + ATP = L-aspartyl-tRNA(Asx) + AMP + diphosphate. Its function is as follows. Aspartyl-tRNA synthetase with relaxed tRNA specificity since it is able to aspartylate not only its cognate tRNA(Asp) but also tRNA(Asn). Reaction proceeds in two steps: L-aspartate is first activated by ATP to form Asp-AMP and then transferred to the acceptor end of tRNA(Asp/Asn). The chain is Aspartate--tRNA(Asp/Asn) ligase from Bordetella avium (strain 197N).